The sequence spans 156 residues: Ribonuclease H (156 aa).

Positions 2–144 (TMKNVQAFTD…CDVLARTQAS (143 aa)) constitute an RNase H type-1 domain. 4 residues coordinate Mg(2+): Asp11, Glu49, Asp71, and Asp136.

This sequence belongs to the RNase H family. As to quaternary structure, monomer. It depends on Mg(2+) as a cofactor.

It is found in the cytoplasm. The enzyme catalyses Endonucleolytic cleavage to 5'-phosphomonoester.. Functionally, endonuclease that specifically degrades the RNA of RNA-DNA hybrids. The protein is Ribonuclease H of Nitratidesulfovibrio vulgaris (strain DSM 19637 / Miyazaki F) (Desulfovibrio vulgaris).